Reading from the N-terminus, the 205-residue chain is CASP-like protein 2A1 (205 aa).

At Met1–Thr35 the chain is on the cytoplasmic side. The chain crosses the membrane as a helical span at residues Val36–Leu56. Residues Lys57–Tyr77 are Extracellular-facing. Residues Leu78–Met98 form a helical membrane-spanning segment. Over Pro99–Arg106 the chain is Cytoplasmic. Residues Ala107 to Val127 form a helical membrane-spanning segment. Residues Ser128–Lys157 are Extracellular-facing. The chain crosses the membrane as a helical span at residues Thr158–Ile178. The Cytoplasmic portion of the chain corresponds to Ser179 to Ser205.

This sequence belongs to the Casparian strip membrane proteins (CASP) family. As to quaternary structure, homodimer and heterodimers.

The protein localises to the cell membrane. This Vitis vinifera (Grape) protein is CASP-like protein 2A1.